The following is a 177-amino-acid chain: 3-hydroxydecanoyl-[acyl-carrier-protein] dehydratase (177 aa).

H76 is a catalytic residue.

It belongs to the thioester dehydratase family. FabA subfamily. In terms of assembly, homodimer.

The protein localises to the cytoplasm. The catalysed reaction is a (3R)-hydroxyacyl-[ACP] = a (2E)-enoyl-[ACP] + H2O. The enzyme catalyses (3R)-hydroxydecanoyl-[ACP] = (2E)-decenoyl-[ACP] + H2O. It carries out the reaction (2E)-decenoyl-[ACP] = (3Z)-decenoyl-[ACP]. It participates in lipid metabolism; fatty acid biosynthesis. In terms of biological role, necessary for the introduction of cis unsaturation into fatty acids. Catalyzes the dehydration of (3R)-3-hydroxydecanoyl-ACP to E-(2)-decenoyl-ACP and then its isomerization to Z-(3)-decenoyl-ACP. Can catalyze the dehydratase reaction for beta-hydroxyacyl-ACPs with saturated chain lengths up to 16:0, being most active on intermediate chain length. The sequence is that of 3-hydroxydecanoyl-[acyl-carrier-protein] dehydratase from Actinobacillus succinogenes (strain ATCC 55618 / DSM 22257 / CCUG 43843 / 130Z).